A 118-amino-acid chain; its full sequence is Large ribosomal subunit protein bL20 (118 aa).

The protein belongs to the bacterial ribosomal protein bL20 family.

Binds directly to 23S ribosomal RNA and is necessary for the in vitro assembly process of the 50S ribosomal subunit. It is not involved in the protein synthesizing functions of that subunit. This Thermosipho africanus (strain TCF52B) protein is Large ribosomal subunit protein bL20.